We begin with the raw amino-acid sequence, 364 residues long: MALALLEDWCRIMSVDEQKSLMVTGIPVDYEEAEIQEVLQETLKSLGSYRLLGKIFRKQENANAVLLELLEDTDVSAIPSEVQGKGGVWKVVFKTPNQDTEFLERLNLFLEKEGQTVSGMFRALGHEGMSPATVPCISPELLAHLLGQAMAHAPQPLLPMRYRKLRVFSGSAVPAPEEEPFEVWLEQATEIVKEWPVTEAEKKRWLAESLRGPALDLMHIVQADNPSISVEECLEAFKQVFGSLESRRTAQVRYLKTYQEEGEKVSAYVLRLETLLRRAVEKRAIPRRIADQVRLEQVMAGATLNQMLWCRLRELKDQGPPPNFLELMKVIREEEEEEASFENESIEEPEEGDGYGGWNHEGDD.

Ala2 carries the N-acetylalanine modification. Residues 335–353 show a composition bias toward acidic residues; that stretch reads EEEEASFENESIEEPEEGD. Positions 335-364 are disordered; sequence EEEEASFENESIEEPEEGDGYGGWNHEGDD. Over residues 354 to 364 the composition is skewed to gly residues; that stretch reads GYGGWNHEGDD.

It belongs to the PNMA family.

The protein resides in the nucleus. It localises to the nucleolus. The protein is Paraneoplastic antigen Ma2 homolog (PNMA2) of Macaca fascicularis (Crab-eating macaque).